Reading from the N-terminus, the 247-residue chain is Protein NipSnap homolog 3A (247 aa).

N6-acetyllysine occurs at positions 48 and 166.

This sequence belongs to the NipSnap family.

The protein resides in the cytoplasm. It is found in the cytosol. The sequence is that of Protein NipSnap homolog 3A (NIPSNAP3A) from Pongo abelii (Sumatran orangutan).